The sequence spans 68 residues: Large ribosomal subunit protein uL29 (68 aa).

This sequence belongs to the universal ribosomal protein uL29 family.

This Streptococcus thermophilus (strain ATCC BAA-250 / LMG 18311) protein is Large ribosomal subunit protein uL29.